Reading from the N-terminus, the 443-residue chain is NADH-quinone oxidoreductase subunit D 1 (443 aa).

The protein belongs to the complex I 49 kDa subunit family. As to quaternary structure, NDH-1 is composed of 14 different subunits. Subunits NuoB, C, D, E, F, and G constitute the peripheral sector of the complex.

The protein resides in the cell membrane. The enzyme catalyses a quinone + NADH + 5 H(+)(in) = a quinol + NAD(+) + 4 H(+)(out). NDH-1 shuttles electrons from NADH, via FMN and iron-sulfur (Fe-S) centers, to quinones in the respiratory chain. The immediate electron acceptor for the enzyme in this species is believed to be a menaquinone. Couples the redox reaction to proton translocation (for every two electrons transferred, four hydrogen ions are translocated across the cytoplasmic membrane), and thus conserves the redox energy in a proton gradient. This chain is NADH-quinone oxidoreductase subunit D 1, found in Streptomyces avermitilis (strain ATCC 31267 / DSM 46492 / JCM 5070 / NBRC 14893 / NCIMB 12804 / NRRL 8165 / MA-4680).